A 1163-amino-acid polypeptide reads, in one-letter code: Receptor-type guanylate cyclase gcy-21 (1163 aa).

The first 17 residues, 1-17, serve as a signal peptide directing secretion; sequence MLSAVLLLLFFIQNVQN. Residues 18–490 lie on the Extracellular side of the membrane; sequence FDKIELEDIT…ENCGPPANNT (473 aa). N-linked (GlcNAc...) asparagine glycosylation is found at N102, N296, N322, N346, N466, and N488. A helical membrane pass occupies residues 491-511; it reads FIIVISVGVAVLIGLAIAAAF. Over 512–1163 the chain is Cytoplasmic; the sequence is LYKRYRYERR…QIQEKTYEFS (652 aa). The Protein kinase domain maps to 587 to 882; it reads FNTGSTARAG…QIKRKLKPLT (296 aa). ATP is bound by residues 593–601 and K635; that span reads ARAGPFGPI. A coiled-coil region spans residues 901 to 930; the sequence is TDKLEKDIAERNEELEGEKAKSEALLKMML. In terms of domain architecture, Guanylate cyclase spans 953-1083; sequence TVFFSDCPGF…DTVNTASRME (131 aa).

Belongs to the adenylyl cyclase class-4/guanylyl cyclase family. As to expression, expressed in ASG sensory neurons.

It is found in the cell membrane. It carries out the reaction GTP = 3',5'-cyclic GMP + diphosphate. Guanylate cyclase involved in the production of the second messenger cGMP. Plays a role in dauer formation. The polypeptide is Receptor-type guanylate cyclase gcy-21 (Caenorhabditis elegans).